A 298-amino-acid polypeptide reads, in one-letter code: N-acetylmuramic acid 6-phosphate etherase (298 aa).

The 164-residue stretch at 55-218 folds into the SIS domain; sequence IHAQVSGGGR…STGLMIKSGK (164 aa). The active-site Proton donor is the Glu-83. Glu-114 is an active-site residue.

It belongs to the GCKR-like family. MurNAc-6-P etherase subfamily. In terms of assembly, homodimer.

The enzyme catalyses N-acetyl-D-muramate 6-phosphate + H2O = N-acetyl-D-glucosamine 6-phosphate + (R)-lactate. The protein operates within amino-sugar metabolism; N-acetylmuramate degradation. Its pathway is amino-sugar metabolism; 1,6-anhydro-N-acetylmuramate degradation. It functions in the pathway cell wall biogenesis; peptidoglycan recycling. Functionally, specifically catalyzes the cleavage of the D-lactyl ether substituent of MurNAc 6-phosphate, producing GlcNAc 6-phosphate and D-lactate. Together with AnmK, is also required for the utilization of anhydro-N-acetylmuramic acid (anhMurNAc) either imported from the medium or derived from its own cell wall murein, and thus plays a role in cell wall recycling. This chain is N-acetylmuramic acid 6-phosphate etherase, found in Escherichia coli (strain K12 / MC4100 / BW2952).